Reading from the N-terminus, the 119-residue chain is Hydrogenase maturation factor HypA (119 aa).

H2 provides a ligand contact to Ni(2+). Positions 73, 76, 89, and 92 each coordinate Zn(2+).

It belongs to the HypA/HybF family.

Involved in the maturation of [NiFe] hydrogenases. Required for nickel insertion into the metal center of the hydrogenase. The protein is Hydrogenase maturation factor HypA of Dehalococcoides mccartyi (strain ATCC BAA-2266 / KCTC 15142 / 195) (Dehalococcoides ethenogenes (strain 195)).